Consider the following 377-residue polypeptide: Nucleosome assembly protein 1;2 (377 aa).

Residues 26–80 are a coiled coil; the sequence is VNVLKNKLHDLTGKHSNVTESLSPNVRKRVEALREIQTEHDELEAKFFEERAALE. The short motif at 47–62 is the Nuclear export signal element; that stretch reads LSPNVRKRVEALREIQ. The Nuclear localization signal motif lies at 223 to 228; sequence KKKPKK. Residues 298 to 377 are disordered; that stretch reads EAAEDDYAEL…GERPPECKQQ (80 aa). Over residues 299–342 the composition is skewed to acidic residues; it reads AAEDDYAELEDDEDEDDDEEDDEDEDEEEEDEEDDEDEEEDEDE. Position 374 is a cysteine methyl ester (Cys374). Cys374 carries the S-farnesyl cysteine lipid modification. Positions 375-377 are cleaved as a propeptide — removed in mature form; the sequence is KQQ.

The protein belongs to the nucleosome assembly protein (NAP) family. In terms of assembly, binds preferentially histone H1 in vitro. Interacts with CYCB1;1.

It localises to the nucleus. The protein resides in the cytoplasm. Its function is as follows. May modulate chromatin structure by regulation of nucleosome assembly/disassembly. Could function together with B-type cyclins in the regulation of microtubule dynamics. The polypeptide is Nucleosome assembly protein 1;2 (NAP1;2) (Nicotiana tabacum (Common tobacco)).